The following is a 173-amino-acid chain: dCTP deaminase (173 aa).

DCTP-binding positions include 97-102 (RSSFAR) and Asp-113. Catalysis depends on Glu-123, which acts as the Proton donor/acceptor. Residues Tyr-155 and Gln-162 each contribute to the dCTP site.

Belongs to the dCTP deaminase family. As to quaternary structure, homotrimer.

The enzyme catalyses dCTP + H2O + H(+) = dUTP + NH4(+). It participates in pyrimidine metabolism; dUMP biosynthesis; dUMP from dCTP (dUTP route): step 1/2. Catalyzes the deamination of dCTP to dUTP. The protein is dCTP deaminase of Acidianus ambivalens (Desulfurolobus ambivalens).